Reading from the N-terminus, the 97-residue chain is MDFSQLGGLLDGMKKEFSQLEEKNKDTIHTSKSGGGMVSVSFNGLGELVDLQIDDSLLEDKEAMQIYLMSALNDGYKAVEENRKNLAFNMLGNFAKL.

Belongs to the YbaB/EbfC family. Homodimer.

Its subcellular location is the cytoplasm. The protein localises to the nucleoid. Its function is as follows. Binds to DNA and alters its conformation. May be involved in regulation of gene expression, nucleoid organization and DNA protection. The polypeptide is Nucleoid-associated protein HP_0035 (Helicobacter pylori (strain ATCC 700392 / 26695) (Campylobacter pylori)).